We begin with the raw amino-acid sequence, 154 residues long: Large ribosomal subunit protein bL9 (154 aa).

This sequence belongs to the bacterial ribosomal protein bL9 family.

Its function is as follows. Binds to the 23S rRNA. The protein is Large ribosomal subunit protein bL9 of Buchnera aphidicola subsp. Baizongia pistaciae (strain Bp).